Consider the following 94-residue polypeptide: Pyrimidine/purine nucleoside phosphorylase (94 aa).

Belongs to the nucleoside phosphorylase PpnP family.

It catalyses the reaction a purine D-ribonucleoside + phosphate = a purine nucleobase + alpha-D-ribose 1-phosphate. It carries out the reaction adenosine + phosphate = alpha-D-ribose 1-phosphate + adenine. The enzyme catalyses cytidine + phosphate = cytosine + alpha-D-ribose 1-phosphate. The catalysed reaction is guanosine + phosphate = alpha-D-ribose 1-phosphate + guanine. It catalyses the reaction inosine + phosphate = alpha-D-ribose 1-phosphate + hypoxanthine. It carries out the reaction thymidine + phosphate = 2-deoxy-alpha-D-ribose 1-phosphate + thymine. The enzyme catalyses uridine + phosphate = alpha-D-ribose 1-phosphate + uracil. The catalysed reaction is xanthosine + phosphate = alpha-D-ribose 1-phosphate + xanthine. Functionally, catalyzes the phosphorolysis of diverse nucleosides, yielding D-ribose 1-phosphate and the respective free bases. Can use uridine, adenosine, guanosine, cytidine, thymidine, inosine and xanthosine as substrates. Also catalyzes the reverse reactions. This is Pyrimidine/purine nucleoside phosphorylase from Teredinibacter turnerae (strain ATCC 39867 / T7901).